The following is a 120-amino-acid chain: uncharacterized protein (120 aa).

This is an uncharacterized protein from Bacillus subtilis (strain 168).